The chain runs to 184 residues: UPF0149 protein PputW619_5026 (184 aa).

The protein belongs to the UPF0149 family.

This chain is UPF0149 protein PputW619_5026, found in Pseudomonas putida (strain W619).